Here is a 204-residue protein sequence, read N- to C-terminus: Inner membrane-spanning protein YciB (204 aa).

The next 6 helical transmembrane spans lie at 3–23 (AEIS…VFFF), 45–65 (IFIA…VSWI), 70–90 (LPIM…LTLW), 107–127 (LFGV…GYVF), 145–165 (WGVF…MFTT), and 168–188 (WVAF…MAQM).

Belongs to the YciB family.

It is found in the cell inner membrane. Its function is as follows. Plays a role in cell envelope biogenesis, maintenance of cell envelope integrity and membrane homeostasis. The protein is Inner membrane-spanning protein YciB of Agrobacterium fabrum (strain C58 / ATCC 33970) (Agrobacterium tumefaciens (strain C58)).